A 291-amino-acid chain; its full sequence is Protease HtpX (291 aa).

The next 2 helical transmembrane spans lie at 4-24 (VLLF…VLSV) and 37-57 (GGLL…SLLM). Histidine 143 contributes to the Zn(2+) binding site. Residue glutamate 144 is part of the active site. Position 147 (histidine 147) interacts with Zn(2+). The next 2 helical transmembrane spans lie at 158–178 (LIQG…AGIV) and 198–218 (FAIS…IVMW). Glutamate 224 contributes to the Zn(2+) binding site.

Belongs to the peptidase M48B family. The cofactor is Zn(2+).

It is found in the cell inner membrane. The sequence is that of Protease HtpX from Tolumonas auensis (strain DSM 9187 / NBRC 110442 / TA 4).